We begin with the raw amino-acid sequence, 366 residues long: Structure-specific endonuclease subunit SLX1 (366 aa).

The region spanning 14–95 is the GIY-YIG domain; that stretch reads AFYCCYLLRS…QNTHATRHID (82 aa). Disordered stretches follow at residues 31-59 and 102-124; these read IGST…SMQG and RAEE…KRPP. The span at 109 to 123 shows a compositional bias: basic residues; sequence GKKKATSPGRRRKRP. An SLX1-type zinc finger spans residues 234 to 289; that stretch reads CGVCKNPADMSSSLILVCPIEACQTVSHLSCLSNKFLTEGGELETLVPLEGTCPGC. The segment at 317–366 is disordered; it reads KPKRKRKSDNPAESDAADGQALEQEDEELDETWMEDMSQDEEPSPVKKSR. Residues 339 to 359 are compositionally biased toward acidic residues; the sequence is EQEDEELDETWMEDMSQDEEP.

It belongs to the SLX1 family. Forms a heterodimer with SLX4. A divalent metal cation serves as cofactor.

It localises to the nucleus. Catalytic subunit of the SLX1-SLX4 structure-specific endonuclease that resolves DNA secondary structures generated during DNA repair and recombination. Has endonuclease activity towards branched DNA substrates, introducing single-strand cuts in duplex DNA close to junctions with ss-DNA. The protein is Structure-specific endonuclease subunit SLX1 of Phaeosphaeria nodorum (strain SN15 / ATCC MYA-4574 / FGSC 10173) (Glume blotch fungus).